A 904-amino-acid chain; its full sequence is Phosphoenolpyruvate carboxylase (904 aa).

The disordered stretch occupies residues 52-71 (ISRRESDAPPSTLSEQLTGR). Active-site residues include His-151 and Lys-570.

The protein belongs to the PEPCase type 1 family. The cofactor is Mg(2+).

It carries out the reaction oxaloacetate + phosphate = phosphoenolpyruvate + hydrogencarbonate. Forms oxaloacetate, a four-carbon dicarboxylic acid source for the tricarboxylic acid cycle. The chain is Phosphoenolpyruvate carboxylase from Xanthomonas oryzae pv. oryzae (strain MAFF 311018).